The following is a 146-amino-acid chain: Flagellar assembly factor FliW (146 aa).

It belongs to the FliW family. Interacts with translational regulator CsrA and flagellin(s).

It localises to the cytoplasm. Functionally, acts as an anti-CsrA protein, binds CsrA and prevents it from repressing translation of its target genes, one of which is flagellin. Binds to flagellin and participates in the assembly of the flagellum. In Azoarcus sp. (strain BH72), this protein is Flagellar assembly factor FliW.